We begin with the raw amino-acid sequence, 336 residues long: Inositol 2-dehydrogenase (336 aa).

This sequence belongs to the Gfo/Idh/MocA family. In terms of assembly, homotetramer.

The enzyme catalyses myo-inositol + NAD(+) = scyllo-inosose + NADH + H(+). In terms of biological role, involved in the oxidation of myo-inositol (MI) to 2-keto-myo-inositol (2KMI or 2-inosose). This Pseudomonas fluorescens (strain SBW25) protein is Inositol 2-dehydrogenase.